The chain runs to 211 residues: Urease accessory protein UreF (211 aa).

A disordered region spans residues 71 to 93 (DDADRETDARTPAPAARHASRSQ).

The protein belongs to the UreF family. In terms of assembly, ureD, UreF and UreG form a complex that acts as a GTP-hydrolysis-dependent molecular chaperone, activating the urease apoprotein by helping to assemble the nickel containing metallocenter of UreC. The UreE protein probably delivers the nickel.

Its subcellular location is the cytoplasm. Its function is as follows. Required for maturation of urease via the functional incorporation of the urease nickel metallocenter. The protein is Urease accessory protein UreF of Mycobacterium tuberculosis (strain ATCC 25177 / H37Ra).